Consider the following 381-residue polypeptide: tRNA (guanine(26)-N(2))-dimethyltransferase (381 aa).

One can recognise a Trm1 methyltransferase domain in the interval 6-378 (FEVHEGKAKV…APYEVFVEVM (373 aa)). The S-adenosyl-L-methionine site is built by Arg-38, Arg-63, Asp-80, Asp-122, and Ala-123.

This sequence belongs to the class I-like SAM-binding methyltransferase superfamily. Trm1 family. In terms of assembly, monomer.

It catalyses the reaction guanosine(26) in tRNA + 2 S-adenosyl-L-methionine = N(2)-dimethylguanosine(26) in tRNA + 2 S-adenosyl-L-homocysteine + 2 H(+). In terms of biological role, dimethylates a single guanine residue at position 26 of a number of tRNAs using S-adenosyl-L-methionine as donor of the methyl groups. The protein is tRNA (guanine(26)-N(2))-dimethyltransferase of Pyrococcus furiosus (strain ATCC 43587 / DSM 3638 / JCM 8422 / Vc1).